We begin with the raw amino-acid sequence, 709 residues long: DNA helicase/primase complex-associated protein (709 aa).

The disordered stretch occupies residues 141–176 (SGDDGRDQQPPPVDGFGSEMEGEQTCPHAQRHSESP).

This sequence belongs to the herpesviridae HEPA family. As to quaternary structure, associates with the primase and the helicase to form the helicase-primase complex. Interacts with the origin-binding protein. Interacts with the polymerase catalytic subunit.

It is found in the host nucleus. In terms of biological role, component of the helicase/primase complex. Unwinds the DNA at the replication forks and generates single-stranded DNA for both leading and lagging strand synthesis. The primase synthesizes short RNA primers on the lagging strand that the polymerase presumably elongates using dNTPs. The primase-associated factor has no known catalytic activity in the complex and may serve to facilitate the formation of the replisome by directly interacting with the origin-binding protein and the polymerase. The protein is DNA helicase/primase complex-associated protein of Epstein-Barr virus (strain B95-8) (HHV-4).